The chain runs to 545 residues: 2-oxo-Delta(3)-4,5,5-trimethylcyclopentenylacetyl-CoA monooxygenase (545 aa).

Residues T20, E39, 47-50, 59-60, Y65, and V112 each bind FAD; these read TWYW and DT. 57–59 provides a ligand contact to NADP(+); that stretch reads RLD. NADP(+) contacts are provided by residues 193-199 and 216-217; these read TGATGVQ and RT. V446 is a binding site for FAD. W501 lines the NADP(+) pocket.

It belongs to the FAD-binding monooxygenase family. As to quaternary structure, homodimer. The cofactor is FAD.

It catalyses the reaction [(1R)-2,2,3-trimethyl-5-oxocyclopent-3-enyl]acetyl-CoA + NADPH + O2 + H(+) = [(2R)-3,3,4-trimethyl-6-oxo-3,6-dihydro-1H-pyran-2-yl]acetyl-CoA + NADP(+) + H2O. It functions in the pathway terpene metabolism; (R)-camphor degradation. Functionally, involved in the degradation of (+)-camphor. Catalyzes the lactonization of 2-oxo-delta(3)-4,5, 5-trimethylcyclopentenylacetyl-CoA (OT-CoA), a key intermediate in the metabolism of camphor. 2-Oxocyclopentyl ethyl acetate is also a good substrate, as is 2-oxocyclohexyl ethyl acetate and methyl-substituted cyclohexanones, but free acid is a poor substrate. In Pseudomonas putida (Arthrobacter siderocapsulatus), this protein is 2-oxo-Delta(3)-4,5,5-trimethylcyclopentenylacetyl-CoA monooxygenase (otemo).